The chain runs to 239 residues: Elongation factor Ts (239 aa).

Residues 82–85 (TDFV) form an involved in Mg(2+) ion dislocation from EF-Tu region. The disordered stretch occupies residues 213–239 (AAQTKPKAEEKPAAKKATSKKKKGKKK). Residues 229–239 (ATSKKKKGKKK) are compositionally biased toward basic residues.

Belongs to the EF-Ts family.

The protein resides in the cytoplasm. Its function is as follows. Associates with the EF-Tu.GDP complex and induces the exchange of GDP to GTP. It remains bound to the aminoacyl-tRNA.EF-Tu.GTP complex up to the GTP hydrolysis stage on the ribosome. The polypeptide is Elongation factor Ts (Acaryochloris marina (strain MBIC 11017)).